The sequence spans 324 residues: MLRSKLSSLREYLTPIRHTSDFTTTGEISPEEFVEAGDYLVYKFPTWQWSSAPDKLKKDFLPPDKQYLITKHVSSYQRAVTYLGIKSDLDEDEEELEDGWVKSHKINNDPSRLKTDASGENSGGNTNDNDDTNEINDIDELIDENAEEQSSEDENDFEELVETNANSNLRKYDLYITYSTSYRVPKMYLVGFNSNGIPLLPKQMFEDISGDYRDKTATIETLPVSYNTMSVSIHPCKHSSVMKVLMAHAAASKKRENPADLTDLAEQTGSLNLKDKVPGRDFGEDVDIEENVPGIRVDQYLIIFLKFIASVTPGIEYDYTMDAL.

A flexible region region spans residues 82-166; the sequence is YLGIKSDLDE…FEELVETNAN (85 aa). Residues 100–134 form a disordered region; it reads WVKSHKINNDPSRLKTDASGENSGGNTNDNDDTNE. The Glycyl thioester intermediate role is filled by Cys236. Positions 240–299 are handle region; that stretch reads SVMKVLMAHAAASKKRENPADLTDLAEQTGSLNLKDKVPGRDFGEDVDIEENVPGIRVDQ.

The protein belongs to the ATG3 family. In terms of assembly, monomer. Interacts with ATG8 through an intermediate thioester bond through the C-terminal Gly of ATG8. Also interacts with the 40 amino acid C-terminal region of the E1-like ATG7 enzyme. Also interacts with the ATG12-ATG5 conjugate.

The protein resides in the cytoplasm. Functionally, E2 conjugating enzyme required for the cytoplasm to vacuole transport (Cvt) and autophagy. Required for selective autophagic degradation of the nucleus (nucleophagy) as well as for mitophagy which contributes to regulate mitochondrial quantity and quality by eliminating the mitochondria to a basal level to fulfill cellular energy requirements and preventing excess ROS production. Responsible for the E2-like covalent binding of phosphatidylethanolamine to the C-terminal Gly of ATG8. The ATG12-ATG5 conjugate plays a role of an E3 and promotes the transfer of ATG8 from ATG3 to phosphatidylethanolamine (PE). This step is required for the membrane association of ATG8. The formation of the ATG8-phosphatidylethanolamine conjugate is essential for autophagy and for the cytoplasm to vacuole transport (Cvt). The ATG8-PE conjugate mediates tethering between adjacent membranes and stimulates membrane hemifusion, leading to expansion of the autophagosomal membrane during autophagy. The sequence is that of Autophagy-related protein 3 (ATG3) from Debaryomyces hansenii (strain ATCC 36239 / CBS 767 / BCRC 21394 / JCM 1990 / NBRC 0083 / IGC 2968) (Yeast).